Here is a 334-residue protein sequence, read N- to C-terminus: D-fructose 1,6-bisphosphatase class 2/sedoheptulose 1,7-bisphosphatase (334 aa).

Positions 33, 57, 85, and 88 each coordinate Mn(2+). Residues 88–90, tyrosine 119, 164–166, and 186–188 each bind substrate; these read EGT, RAR, and DGD. Glutamate 213 contacts Mn(2+).

It belongs to the FBPase class 2 family. Homotetramer. Requires Mn(2+) as cofactor.

It carries out the reaction beta-D-fructose 1,6-bisphosphate + H2O = beta-D-fructose 6-phosphate + phosphate. The enzyme catalyses D-sedoheptulose 1,7-bisphosphate + H2O = D-sedoheptulose 7-phosphate + phosphate. Its pathway is carbohydrate biosynthesis; Calvin cycle. In terms of biological role, catalyzes the hydrolysis of fructose 1,6-bisphosphate (Fru 1,6-P2) and sedoheptulose 1,7-bisphosphate (Sed 1,7-P2) to fructose 6-phosphate and sedoheptulose 7-phosphate, respectively. The sequence is that of D-fructose 1,6-bisphosphatase class 2/sedoheptulose 1,7-bisphosphatase from Parasynechococcus marenigrum (strain WH8102).